The sequence spans 186 residues: Biofilm operon icaADBC HTH-type negative transcriptional regulator IcaR (186 aa).

The HTH tetR-type domain maps to 1-59 (MKDKIIDNAITLFSEKGYDGTTLDDIAKSVNIKKASLYYHFDSKKSIYEQSVKCCFDYL). A DNA-binding region (H-T-H motif) is located at residues 22–41 (TLDDIAKSVNIKKASLYYHF).

Homodimer.

Represses transcription of the icaADBC operon necessary for biofilm production. The sequence is that of Biofilm operon icaADBC HTH-type negative transcriptional regulator IcaR (icaR) from Staphylococcus aureus (strain NCTC 8325 / PS 47).